Reading from the N-terminus, the 117-residue chain is B-enzyme (117 aa).

The active site involves D89.

It carries out the reaction Hydrolysis of (1-&gt;4)-beta-linkages between N-acetylmuramic acid and N-acetyl-D-glucosamine residues in a peptidoglycan and between N-acetyl-D-glucosamine residues in chitodextrins.. The polypeptide is B-enzyme (lyzB) (Bacillus subtilis).